The chain runs to 306 residues: tRNA dimethylallyltransferase (306 aa).

Residue 6-13 coordinates ATP; sequence GPTASGKS. A substrate-binding site is contributed by 8–13; that stretch reads TASGKS.

It belongs to the IPP transferase family. In terms of assembly, monomer. Mg(2+) is required as a cofactor.

It carries out the reaction adenosine(37) in tRNA + dimethylallyl diphosphate = N(6)-dimethylallyladenosine(37) in tRNA + diphosphate. Its function is as follows. Catalyzes the transfer of a dimethylallyl group onto the adenine at position 37 in tRNAs that read codons beginning with uridine, leading to the formation of N6-(dimethylallyl)adenosine (i(6)A). This is tRNA dimethylallyltransferase from Sphingopyxis alaskensis (strain DSM 13593 / LMG 18877 / RB2256) (Sphingomonas alaskensis).